A 570-amino-acid polypeptide reads, in one-letter code: 2-isopropylmalate synthase (570 aa).

A Pyruvate carboxyltransferase domain is found at 31–305 (PIWMSTDLRD…DPELDFSHIN (275 aa)). Asp40, His244, His246, and Asn280 together coordinate Mg(2+). A regulatory domain region spans residues 437–570 (SDGAIGYVSH…RRSSAQATVA (134 aa)).

This sequence belongs to the alpha-IPM synthase/homocitrate synthase family. LeuA type 2 subfamily. Homodimer. It depends on Mg(2+) as a cofactor.

It is found in the cytoplasm. The enzyme catalyses 3-methyl-2-oxobutanoate + acetyl-CoA + H2O = (2S)-2-isopropylmalate + CoA + H(+). Its pathway is amino-acid biosynthesis; L-leucine biosynthesis; L-leucine from 3-methyl-2-oxobutanoate: step 1/4. In terms of biological role, catalyzes the condensation of the acetyl group of acetyl-CoA with 3-methyl-2-oxobutanoate (2-ketoisovalerate) to form 3-carboxy-3-hydroxy-4-methylpentanoate (2-isopropylmalate). The chain is 2-isopropylmalate synthase from Ralstonia pickettii (strain 12J).